The primary structure comprises 21 residues: Brevinin-1OKb (21 aa).

Lys-21 carries the post-translational modification Lysine amide.

Expressed by the skin glands.

Its subcellular location is the secreted. In terms of biological role, antimicrobial peptide. The sequence is that of Brevinin-1OKb from Nidirana okinavana (Kampira Falls frog).